Consider the following 138-residue polypeptide: Large ribosomal subunit protein uL16 (138 aa).

It belongs to the universal ribosomal protein uL16 family. In terms of assembly, part of the 50S ribosomal subunit.

Binds 23S rRNA and is also seen to make contacts with the A and possibly P site tRNAs. The chain is Large ribosomal subunit protein uL16 from Neisseria gonorrhoeae (strain ATCC 700825 / FA 1090).